We begin with the raw amino-acid sequence, 520 residues long: NAD(P)H-quinone oxidoreductase subunit 2 (520 aa).

Transmembrane regions (helical) follow at residues 15-35 (ILPE…DLIL), 42-62 (WIGY…YFQW), 79-99 (LSII…LMSI), 106-126 (GTAL…GMFV), 132-152 (LVMI…LTGY), 167-187 (LLIG…LYGL), 210-230 (LGAV…ISAA), 244-264 (PTPV…ALAI), 280-300 (FVFT…ALAQ), 306-326 (MLAY…IAGT), 334-354 (IFYL…IILF), 378-398 (LGLS…GFFG), 400-420 (IYLF…LGLV), and 466-486 (VGLV…NPLF).

This sequence belongs to the complex I subunit 2 family. NDH-1 can be composed of about 15 different subunits; different subcomplexes with different compositions have been identified which probably have different functions.

Its subcellular location is the cellular thylakoid membrane. The enzyme catalyses a plastoquinone + NADH + (n+1) H(+)(in) = a plastoquinol + NAD(+) + n H(+)(out). The catalysed reaction is a plastoquinone + NADPH + (n+1) H(+)(in) = a plastoquinol + NADP(+) + n H(+)(out). In terms of biological role, NDH-1 shuttles electrons from an unknown electron donor, via FMN and iron-sulfur (Fe-S) centers, to quinones in the respiratory and/or the photosynthetic chain. The immediate electron acceptor for the enzyme in this species is believed to be plastoquinone. Couples the redox reaction to proton translocation, and thus conserves the redox energy in a proton gradient. Cyanobacterial NDH-1 also plays a role in inorganic carbon-concentration. The chain is NAD(P)H-quinone oxidoreductase subunit 2 from Trichormus variabilis (strain ATCC 29413 / PCC 7937) (Anabaena variabilis).